Consider the following 556-residue polypeptide: Urocanate hydratase (556 aa).

Residues 52–53 (GG), Gln-130, 176–178 (GMG), Glu-196, Arg-201, 242–243 (NA), 263–267 (QTSAH), 273–274 (YL), and Tyr-322 contribute to the NAD(+) site. Residue Cys-410 is part of the active site. Gly-492 contributes to the NAD(+) binding site.

Belongs to the urocanase family. NAD(+) is required as a cofactor.

Its subcellular location is the cytoplasm. It carries out the reaction 4-imidazolone-5-propanoate = trans-urocanate + H2O. It functions in the pathway amino-acid degradation; L-histidine degradation into L-glutamate; N-formimidoyl-L-glutamate from L-histidine: step 2/3. In terms of biological role, catalyzes the conversion of urocanate to 4-imidazolone-5-propionate. The sequence is that of Urocanate hydratase from Shewanella woodyi (strain ATCC 51908 / MS32).